The sequence spans 680 residues: DNA ligase (680 aa).

Residues 35 to 39 (DADFD), 86 to 87 (SL), and Glu-111 each bind NAD(+). Lys-113 functions as the N6-AMP-lysine intermediate in the catalytic mechanism. The NAD(+) site is built by Arg-134, Glu-174, Lys-290, and Lys-314. 4 residues coordinate Zn(2+): Cys-408, Cys-411, Cys-427, and Cys-433. A BRCT domain is found at 597 to 680 (VAEQTLEGLT…RLLNTGSADE (84 aa)).

It belongs to the NAD-dependent DNA ligase family. LigA subfamily. Mg(2+) is required as a cofactor. Requires Mn(2+) as cofactor.

The enzyme catalyses NAD(+) + (deoxyribonucleotide)n-3'-hydroxyl + 5'-phospho-(deoxyribonucleotide)m = (deoxyribonucleotide)n+m + AMP + beta-nicotinamide D-nucleotide.. DNA ligase that catalyzes the formation of phosphodiester linkages between 5'-phosphoryl and 3'-hydroxyl groups in double-stranded DNA using NAD as a coenzyme and as the energy source for the reaction. It is essential for DNA replication and repair of damaged DNA. The protein is DNA ligase of Corynebacterium glutamicum (strain ATCC 13032 / DSM 20300 / JCM 1318 / BCRC 11384 / CCUG 27702 / LMG 3730 / NBRC 12168 / NCIMB 10025 / NRRL B-2784 / 534).